The sequence spans 488 residues: MDSSCRTPPSNSWVYPTVILCLFGFFSMFRPSEAFLIPFLSEPSKNLTSPEMTNEILPVWTYSYLATLPPVFVLTDYLRYKPVIMLHVVAFATSYLFLLFGQGVMLMQTAEFFFGVVSATEIAYFAYIYSMVSPEHYQKVSSYCRSITLVAYTAGSVLAQLLVSLTNLPYSSLFYISLACVSVAFFFSLFLPMPKKSMFFHAKSDRDDCPKPLEQCTVPKEAQSNRTHSELFANSKNLEDREMSNPDPENSALRHFAHWFQDLKECYSSKHLVYWSLWWAFATAGYNQILNYVQVLWEHKAPSQDSSIYNGAVEAIATFGGALASFSVGYLKVNWDLLGELGLAVFSAVIAGSLFLMNYSRSIWVCYAGYLLVKSSYSFLITIAVFQIAVNLSLERYALVFGIDTFIALVIQTIMTMIVVDQRGLQLPVTTQFLVYGSYFAVIAGVFLMRSIYILCSAKCRKEVQNLATTRSPNEPHPQEPSNVSTKF.

Topologically, residues 1-8 are cytoplasmic; it reads MDSSCRTP. The helical transmembrane segment at 9-29 threads the bilayer; that stretch reads PSNSWVYPTVILCLFGFFSMF. Topologically, residues 30 to 54 are extracellular; that stretch reads RPSEAFLIPFLSEPSKNLTSPEMTN. Asparagine 46 is a glycosylation site (N-linked (GlcNAc...) asparagine). The helical transmembrane segment at 55–75 threads the bilayer; the sequence is EILPVWTYSYLATLPPVFVLT. Residues 76-82 lie on the Cytoplasmic side of the membrane; that stretch reads DYLRYKP. The chain crosses the membrane as a helical span at residues 83–103; the sequence is VIMLHVVAFATSYLFLLFGQG. The Extracellular portion of the chain corresponds to 104–111; sequence VMLMQTAE. Residues 112–132 form a helical membrane-spanning segment; that stretch reads FFFGVVSATEIAYFAYIYSMV. At 133-145 the chain is on the cytoplasmic side; sequence SPEHYQKVSSYCR. The chain crosses the membrane as a helical span at residues 146-166; sequence SITLVAYTAGSVLAQLLVSLT. The Extracellular portion of the chain corresponds to 167-172; the sequence is NLPYSS. Residues 173–193 traverse the membrane as a helical segment; sequence LFYISLACVSVAFFFSLFLPM. Over 194–276 the chain is Cytoplasmic; the sequence is PKKSMFFHAK…YSSKHLVYWS (83 aa). Residues 277–297 form a helical membrane-spanning segment; the sequence is LWWAFATAGYNQILNYVQVLW. Residues 298–310 are Extracellular-facing; sequence EHKAPSQDSSIYN. A helical membrane pass occupies residues 311-331; the sequence is GAVEAIATFGGALASFSVGYL. Topologically, residues 332-335 are cytoplasmic; it reads KVNW. Residues 336-356 form a helical membrane-spanning segment; it reads DLLGELGLAVFSAVIAGSLFL. Topologically, residues 357 to 369 are extracellular; it reads MNYSRSIWVCYAG. Asparagine 358 is a glycosylation site (N-linked (GlcNAc...) asparagine). The chain crosses the membrane as a helical span at residues 370–390; that stretch reads YLLVKSSYSFLITIAVFQIAV. At 391 to 399 the chain is on the cytoplasmic side; the sequence is NLSLERYAL. A helical transmembrane segment spans residues 400–420; sequence VFGIDTFIALVIQTIMTMIVV. Residues 421–428 lie on the Extracellular side of the membrane; sequence DQRGLQLP. The helical transmembrane segment at 429–449 threads the bilayer; it reads VTTQFLVYGSYFAVIAGVFLM. Topologically, residues 450-488 are cytoplasmic; sequence RSIYILCSAKCRKEVQNLATTRSPNEPHPQEPSNVSTKF. The disordered stretch occupies residues 469–488; that stretch reads TTRSPNEPHPQEPSNVSTKF.

The protein belongs to the reduced folate carrier (RFC) transporter (TC 2.A.48) family. In terms of tissue distribution, high expression in kidney, brain, lung and small intestine. Detected in pancreatic acinar cells (at protein level). Also expressed strongly in pancreatic islet cells.

Its subcellular location is the membrane. The catalysed reaction is thiamine(out) + H(+)(in) = thiamine(in) + H(+)(out). Functionally, high-affinity transporter for the intake of thiamine. Unlike the human ortholog, lacks H(+)-dependent pyridoxine transport activity due to an absence of seven critical amino-acids required for pyridoxine transport. This chain is Thiamine transporter 2 (Slc19a3), found in Mus musculus (Mouse).